The chain runs to 233 residues: 3-dehydroquinate dehydratase (233 aa).

3-dehydroquinate contacts are provided by residues 34–36 and Arg64; that span reads ELR. The Proton donor/acceptor role is filled by His118. Catalysis depends on Lys145, which acts as the Schiff-base intermediate with substrate. Residues Arg185, Ser205, and Gln209 each coordinate 3-dehydroquinate.

Belongs to the type-I 3-dehydroquinase family. Homodimer.

It carries out the reaction 3-dehydroquinate = 3-dehydroshikimate + H2O. It functions in the pathway metabolic intermediate biosynthesis; chorismate biosynthesis; chorismate from D-erythrose 4-phosphate and phosphoenolpyruvate: step 3/7. Involved in the third step of the chorismate pathway, which leads to the biosynthesis of aromatic amino acids. Catalyzes the cis-dehydration of 3-dehydroquinate (DHQ) and introduces the first double bond of the aromatic ring to yield 3-dehydroshikimate. This is 3-dehydroquinate dehydratase from Coxiella burnetii (strain CbuK_Q154) (Coxiella burnetii (strain Q154)).